The sequence spans 648 residues: Macrolide export ATP-binding/permease protein MacB (648 aa).

Positions 5-243 (LELKDIRRSY…TGGTEPVVNT (239 aa)) constitute an ABC transporter domain. Residue 41 to 48 (GASGSGKS) participates in ATP binding. 4 helical membrane-spanning segments follow: residues 273–293 (LLTMLGIIIGIASVVSIVVVG), 523–543 (LFLTLVAVISLVVGGIGVMNI), 576–596 (AVLVCLVGGALGITLSLLIAF), and 611–631 (PLALLLAFLCSTVTGILFGWL).

Belongs to the ABC transporter superfamily. Macrolide exporter (TC 3.A.1.122) family. Homodimer. Part of the tripartite efflux system MacAB-TolC, which is composed of an inner membrane transporter, MacB, a periplasmic membrane fusion protein, MacA, and an outer membrane component, TolC. The complex forms a large protein conduit and can translocate molecules across both the inner and outer membranes. Interacts with MacA.

The protein localises to the cell inner membrane. Its function is as follows. Part of the tripartite efflux system MacAB-TolC. MacB is a non-canonical ABC transporter that contains transmembrane domains (TMD), which form a pore in the inner membrane, and an ATP-binding domain (NBD), which is responsible for energy generation. Confers resistance against macrolides. In Escherichia coli (strain UTI89 / UPEC), this protein is Macrolide export ATP-binding/permease protein MacB.